A 430-amino-acid chain; its full sequence is Enolase (430 aa).

Q166 serves as a coordination point for (2R)-2-phosphoglycerate. E208 functions as the Proton donor in the catalytic mechanism. Mg(2+) is bound by residues D245, E288, and D315. (2R)-2-phosphoglycerate is bound by residues K340, R369, S370, and K391. K340 (proton acceptor) is an active-site residue.

Belongs to the enolase family. Mg(2+) serves as cofactor.

It localises to the cytoplasm. The protein localises to the secreted. It is found in the cell surface. It carries out the reaction (2R)-2-phosphoglycerate = phosphoenolpyruvate + H2O. It functions in the pathway carbohydrate degradation; glycolysis; pyruvate from D-glyceraldehyde 3-phosphate: step 4/5. Its function is as follows. Catalyzes the reversible conversion of 2-phosphoglycerate (2-PG) into phosphoenolpyruvate (PEP). It is essential for the degradation of carbohydrates via glycolysis. This chain is Enolase, found in Clostridium kluyveri (strain NBRC 12016).